Reading from the N-terminus, the 821-residue chain is Phenylalanine--tRNA ligase beta subunit (821 aa).

In terms of domain architecture, tRNA-binding spans 39-149; the sequence is RTWAEGVVVG…DAVTVGEDVR (111 aa). In terms of domain architecture, B5 spans 409–503; the sequence is PLERTLTLRL…RLYGYDRFEE (95 aa). Mg(2+) contacts are provided by aspartate 481, aspartate 487, glutamate 490, and glutamate 491. An FDX-ACB domain is found at 724-820; that stretch reads STYPASDRDL…LVEKYAVTLR (97 aa).

This sequence belongs to the phenylalanyl-tRNA synthetase beta subunit family. Type 1 subfamily. Tetramer of two alpha and two beta subunits. Mg(2+) is required as a cofactor.

Its subcellular location is the cytoplasm. The enzyme catalyses tRNA(Phe) + L-phenylalanine + ATP = L-phenylalanyl-tRNA(Phe) + AMP + diphosphate + H(+). The protein is Phenylalanine--tRNA ligase beta subunit of Thermosynechococcus vestitus (strain NIES-2133 / IAM M-273 / BP-1).